Here is a 138-residue protein sequence, read N- to C-terminus: Biopolymer transport protein exbD1 (138 aa).

Topologically, residues 1–16 are cytoplasmic; sequence MIKSSAKHNDFGLTPD. Residues 17–37 form a helical membrane-spanning segment; sequence LTPLLDIIFIVMVFLLLTASV. Over 38-138 the chain is Periplasmic; that stretch reads RLESLEVALP…TQLLTEPSHS (101 aa).

This sequence belongs to the ExbD/TolR family. As to quaternary structure, the accessory proteins ExbB and ExbD seem to form a complex with TonB.

It is found in the cell inner membrane. Involved in the TonB-dependent energy-dependent transport of various receptor-bound substrates. This is Biopolymer transport protein exbD1 (exbD1) from Vibrio cholerae serotype O1 (strain ATCC 39315 / El Tor Inaba N16961).